The chain runs to 171 residues: Prolyl-tRNA synthetase associated domain-containing protein 1 (171 aa).

Belongs to the PRORSD1 family.

The polypeptide is Prolyl-tRNA synthetase associated domain-containing protein 1 (PRORSD1) (Bos taurus (Bovine)).